The sequence spans 100 residues: UPF0235 protein Cvib_0403 (100 aa).

The protein belongs to the UPF0235 family.

This is UPF0235 protein Cvib_0403 from Chlorobium phaeovibrioides (strain DSM 265 / 1930) (Prosthecochloris vibrioformis (strain DSM 265)).